Here is a 359-residue protein sequence, read N- to C-terminus: Anhydro-N-acetylmuramic acid kinase (359 aa).

An ATP-binding site is contributed by 12 to 19 (GTSLDGVD).

It belongs to the anhydro-N-acetylmuramic acid kinase family.

It carries out the reaction 1,6-anhydro-N-acetyl-beta-muramate + ATP + H2O = N-acetyl-D-muramate 6-phosphate + ADP + H(+). The protein operates within amino-sugar metabolism; 1,6-anhydro-N-acetylmuramate degradation. Its pathway is cell wall biogenesis; peptidoglycan recycling. Its function is as follows. Catalyzes the specific phosphorylation of 1,6-anhydro-N-acetylmuramic acid (anhMurNAc) with the simultaneous cleavage of the 1,6-anhydro ring, generating MurNAc-6-P. Is required for the utilization of anhMurNAc either imported from the medium or derived from its own cell wall murein, and thus plays a role in cell wall recycling. The polypeptide is Anhydro-N-acetylmuramic acid kinase (Sulfurovum sp. (strain NBC37-1)).